Here is a 397-residue protein sequence, read N- to C-terminus: Succinate--CoA ligase [ADP-forming] subunit beta (397 aa).

In terms of domain architecture, ATP-grasp spans 9 to 254; that stretch reads KALLKGYGAP…ETEEDAKEIE (246 aa). ATP-binding positions include Lys46, 53 to 55, Glu109, Ala112, and Glu117; that span reads GRG. Residues Asn209 and Asp223 each coordinate Mg(2+). Substrate contacts are provided by residues Asn274 and 331–333; that span reads GIM.

This sequence belongs to the succinate/malate CoA ligase beta subunit family. Heterotetramer of two alpha and two beta subunits. The cofactor is Mg(2+).

The catalysed reaction is succinate + ATP + CoA = succinyl-CoA + ADP + phosphate. The enzyme catalyses GTP + succinate + CoA = succinyl-CoA + GDP + phosphate. It functions in the pathway carbohydrate metabolism; tricarboxylic acid cycle; succinate from succinyl-CoA (ligase route): step 1/1. Functionally, succinyl-CoA synthetase functions in the citric acid cycle (TCA), coupling the hydrolysis of succinyl-CoA to the synthesis of either ATP or GTP and thus represents the only step of substrate-level phosphorylation in the TCA. The beta subunit provides nucleotide specificity of the enzyme and binds the substrate succinate, while the binding sites for coenzyme A and phosphate are found in the alpha subunit. The protein is Succinate--CoA ligase [ADP-forming] subunit beta of Rhizobium etli (strain ATCC 51251 / DSM 11541 / JCM 21823 / NBRC 15573 / CFN 42).